The following is a 332-amino-acid chain: Acryloyl-coenzyme A reductase (332 aa).

C38 provides a ligand contact to Zn(2+). NADP(+) is bound at residue Y39. Residues H60, D90, C93, C96, C104, and C146 each contribute to the Zn(2+) site. NADP(+)-binding positions include 172 to 175 (SGGV) and 194 to 196 (TTS).

This sequence belongs to the zinc-containing alcohol dehydrogenase family. In terms of assembly, monomer. Zn(2+) is required as a cofactor.

It carries out the reaction propanoyl-CoA + NADP(+) = acryloyl-CoA + NADPH + H(+). Its function is as follows. Plays a role in autotrophic carbon fixation via the 3-hydroxypropionate/4-hydroxybutyrate cycle. Catalyzes the acryloyl-CoA dependent NADPH oxidation and formation of propionyl-CoA. The protein is Acryloyl-coenzyme A reductase of Metallosphaera sedula (strain ATCC 51363 / DSM 5348 / JCM 9185 / NBRC 15509 / TH2).